We begin with the raw amino-acid sequence, 93 residues long: uncharacterized protein (93 aa).

The protein resides in the plastid. It is found in the chloroplast. This is an uncharacterized protein from Diacronema lutheri (Unicellular marine alga).